A 100-amino-acid chain; its full sequence is Small ribosomal subunit protein uS14c (100 aa).

Belongs to the universal ribosomal protein uS14 family. Part of the 30S ribosomal subunit.

It localises to the plastid. It is found in the chloroplast. Functionally, binds 16S rRNA, required for the assembly of 30S particles. The sequence is that of Small ribosomal subunit protein uS14c from Trieres chinensis (Marine centric diatom).